A 667-amino-acid polypeptide reads, in one-letter code: Putative L-type lectin-domain containing receptor kinase I.4 (667 aa).

Positions 1-21 are cleaved as a signal peptide; it reads MDCRLHLVLFFSCVCLICLSG. Residues 22 to 294 lie on the Extracellular side of the membrane; sequence QQETGFVYNG…PREEKKKLHP (273 aa). The segment at 24–257 is legume-lectin like; sequence ETGFVYNGFH…NQYILGWSFS (234 aa). Asparagine 55, asparagine 110, asparagine 124, asparagine 128, asparagine 181, asparagine 204, and asparagine 225 each carry an N-linked (GlcNAc...) asparagine glycan. A helical membrane pass occupies residues 295-315; that stretch reads LLIGLVILLVIPVLMVLGGVY. Over 316-667 the chain is Cytoplasmic; it reads WYRRKKYAEV…THSILEGYGR (352 aa). Positions 350–625 constitute a Protein kinase domain; it reads FVKDALVGKG…QYLSQKQPLP (276 aa). ATP-binding positions include 356-364 and lysine 378; that span reads VGKGGFGKV. Aspartate 474 acts as the Proton acceptor in catalysis.

In the C-terminal section; belongs to the protein kinase superfamily. Ser/Thr protein kinase family. The protein in the N-terminal section; belongs to the leguminous lectin family.

The protein resides in the cell membrane. It catalyses the reaction L-seryl-[protein] + ATP = O-phospho-L-seryl-[protein] + ADP + H(+). It carries out the reaction L-threonyl-[protein] + ATP = O-phospho-L-threonyl-[protein] + ADP + H(+). This chain is Putative L-type lectin-domain containing receptor kinase I.4 (LECRK14), found in Arabidopsis thaliana (Mouse-ear cress).